The primary structure comprises 459 residues: Limonoid 7-O-acetyltransferse (459 aa).

Active-site proton acceptor residues include H167 and D391.

Belongs to the plant acyltransferase family. In terms of assembly, monomer. As to expression, expressed in maturing fruits and in juice vesicles.

The catalysed reaction is (1S)-1-acetoxy-luvungin A + acetyl-CoA = (1S)-1,7-diacetoxy-luvungin A + CoA. Its pathway is secondary metabolite biosynthesis; terpenoid biosynthesis. Functionally, acetyltransferase involved in the biosynthesis of limonoids triterpene natural products such as limonin, a compound with insecticidal activity responsible for the bitter taste in citrus. Catalyzes the formation of (1S)-1,7-diacetoxy-luvungin A from (1S)-1-acetoxy-luvungin A. This chain is Limonoid 7-O-acetyltransferse, found in Citrus sinensis (Sweet orange).